The following is a 244-amino-acid chain: MTRTTHFGFKTVSETEKAREVAGVFDSVAERYNLMNDLMSGGMHRLWKRFAIEVSGVRTGERVLDIAGGTADLSSLFLEQVGSRGEVWLTDINNSMLTIGRDRLLDEGTAVPVAQCDAEKLPFPTNYFDCVSVAFGLRNMTHKDVALKEMLRVLRPGGCVIVLEFSRIWKPLQRLYDLYSFKVLPAMGGLVAKDRDSYRYLAESIRVHPSQEELKQMMQKAGFERVQYFNLAANAVALHRGYKF.

Residues Thr70, Asp91, and 117 to 118 (DA) contribute to the S-adenosyl-L-methionine site.

The protein belongs to the class I-like SAM-binding methyltransferase superfamily. MenG/UbiE family.

It carries out the reaction a 2-demethylmenaquinol + S-adenosyl-L-methionine = a menaquinol + S-adenosyl-L-homocysteine + H(+). The catalysed reaction is a 2-methoxy-6-(all-trans-polyprenyl)benzene-1,4-diol + S-adenosyl-L-methionine = a 5-methoxy-2-methyl-3-(all-trans-polyprenyl)benzene-1,4-diol + S-adenosyl-L-homocysteine + H(+). It participates in quinol/quinone metabolism; menaquinone biosynthesis; menaquinol from 1,4-dihydroxy-2-naphthoate: step 2/2. It functions in the pathway cofactor biosynthesis; ubiquinone biosynthesis. In terms of biological role, methyltransferase required for the conversion of demethylmenaquinol (DMKH2) to menaquinol (MKH2) and the conversion of 2-polyprenyl-6-methoxy-1,4-benzoquinol (DDMQH2) to 2-polyprenyl-3-methyl-6-methoxy-1,4-benzoquinol (DMQH2). This Nitrosospira multiformis (strain ATCC 25196 / NCIMB 11849 / C 71) protein is Ubiquinone/menaquinone biosynthesis C-methyltransferase UbiE.